The primary structure comprises 360 residues: Photosystem II protein D1 (360 aa).

The next 3 membrane-spanning stretches (helical) occupy residues 29–46 (YIGW…TATC), 118–133 (HFLI…EWEL), and 142–156 (WICV…AATA). His-118 is a chlorophyll a binding site. Tyr-126 is a binding site for pheophytin a. Residues Asp-170 and Glu-189 each coordinate [CaMn4O5] cluster. A helical transmembrane segment spans residues 197–218 (FHMAGVAGVFGGALFSAMHGSL). Residue His-198 participates in chlorophyll a binding. A quinone contacts are provided by residues His-215 and 264–265 (SF). His-215 is a Fe cation binding site. His-272 provides a ligand contact to Fe cation. A helical transmembrane segment spans residues 274-288 (FLGAWPVVGIWLTAI). [CaMn4O5] cluster is bound by residues His-332, Glu-333, Asp-342, and Ala-344. The propeptide occupies 345–360 (SNSVVPVALTAPSVEA).

The protein belongs to the reaction center PufL/M/PsbA/D family. PSII is composed of 1 copy each of membrane proteins PsbA, PsbB, PsbC, PsbD, PsbE, PsbF, PsbH, PsbI, PsbJ, PsbK, PsbL, PsbM, PsbT, PsbX, PsbY, PsbZ, Psb30/Ycf12, at least 3 peripheral proteins of the oxygen-evolving complex and a large number of cofactors. It forms dimeric complexes. The D1/D2 heterodimer binds P680, chlorophylls that are the primary electron donor of PSII, and subsequent electron acceptors. It shares a non-heme iron and each subunit binds pheophytin, quinone, additional chlorophylls, carotenoids and lipids. D1 provides most of the ligands for the Mn4-Ca-O5 cluster of the oxygen-evolving complex (OEC). There is also a Cl(-1) ion associated with D1 and D2, which is required for oxygen evolution. The PSII complex binds additional chlorophylls, carotenoids and specific lipids. serves as cofactor. Tyr-161 forms a radical intermediate that is referred to as redox-active TyrZ, YZ or Y-Z. In terms of processing, C-terminally processed by CTPA; processing is essential to allow assembly of the oxygen-evolving complex and thus photosynthetic growth.

It is found in the plastid. It localises to the chloroplast thylakoid membrane. It carries out the reaction 2 a plastoquinone + 4 hnu + 2 H2O = 2 a plastoquinol + O2. Functionally, photosystem II (PSII) is a light-driven water:plastoquinone oxidoreductase that uses light energy to abstract electrons from H(2)O, generating O(2) and a proton gradient subsequently used for ATP formation. It consists of a core antenna complex that captures photons, and an electron transfer chain that converts photonic excitation into a charge separation. The D1/D2 (PsbA/PsbD) reaction center heterodimer binds P680, the primary electron donor of PSII as well as several subsequent electron acceptors. In Cyanidioschyzon merolae (strain NIES-3377 / 10D) (Unicellular red alga), this protein is Photosystem II protein D1.